We begin with the raw amino-acid sequence, 168 residues long: uncharacterized protein (168 aa).

Positions 1–10 (MSPTTGPQPN) are enriched in pro residues. Disordered stretches follow at residues 1-23 (MSPT…TGPQ) and 117-143 (EPGN…RGPQ).

This is an uncharacterized protein from Homo sapiens (Human).